A 215-amino-acid polypeptide reads, in one-letter code: Ribonuclease T (215 aa).

Residues 20 to 194 (VVIDVETAGF…YDTLQTAKLF (175 aa)) enclose the Exonuclease domain. Asp-23, Glu-25, His-181, and Asp-186 together coordinate Mg(2+). His-181 acts as the Proton donor/acceptor in catalysis.

Belongs to the RNase T family. In terms of assembly, homodimer. It depends on Mg(2+) as a cofactor.

Its function is as follows. Trims short 3' overhangs of a variety of RNA species, leaving a one or two nucleotide 3' overhang. Responsible for the end-turnover of tRNA: specifically removes the terminal AMP residue from uncharged tRNA (tRNA-C-C-A). Also appears to be involved in tRNA biosynthesis. This is Ribonuclease T from Yersinia pseudotuberculosis serotype I (strain IP32953).